A 260-amino-acid polypeptide reads, in one-letter code: Putative sgc region transcriptional regulator (260 aa).

Positions 5-61 (RPDRIKQMLHYLWQHRHLSTQQAMELFGYAEATVRRDFQYIVNQYPGMIRGHGCLDF) constitute an HTH deoR-type domain. The H-T-H motif DNA-binding region spans 22-41 (LSTQQAMELFGYAEATVRRD).

Putative transcriptional regulator for the sgcREAQCX region. The polypeptide is Putative sgc region transcriptional regulator (sgcR) (Escherichia coli (strain K12)).